A 21-amino-acid chain; its full sequence is Peptide PGLa-BM2 (21 aa).

Position 21 is an alanine amide (A21).

As to expression, expressed by the skin glands.

The protein localises to the secreted. Functionally, antimicrobial peptide. In Xenopus boumbaensis (Mawa clawed frog), this protein is Peptide PGLa-BM2.